The chain runs to 158 residues: 2-C-methyl-D-erythritol 2,4-cyclodiphosphate synthase (158 aa).

Residues D9 and H11 each coordinate a divalent metal cation. Residues D9–H11 and H35–S36 each bind 4-CDP-2-C-methyl-D-erythritol 2-phosphate. H43 serves as a coordination point for a divalent metal cation. Residues D57–G59, F62–D66, A101–A107, T133–E136, F140, and R143 contribute to the 4-CDP-2-C-methyl-D-erythritol 2-phosphate site.

This sequence belongs to the IspF family. Homotrimer. It depends on a divalent metal cation as a cofactor.

The catalysed reaction is 4-CDP-2-C-methyl-D-erythritol 2-phosphate = 2-C-methyl-D-erythritol 2,4-cyclic diphosphate + CMP. Its pathway is isoprenoid biosynthesis; isopentenyl diphosphate biosynthesis via DXP pathway; isopentenyl diphosphate from 1-deoxy-D-xylulose 5-phosphate: step 4/6. Involved in the biosynthesis of isopentenyl diphosphate (IPP) and dimethylallyl diphosphate (DMAPP), two major building blocks of isoprenoid compounds. Catalyzes the conversion of 4-diphosphocytidyl-2-C-methyl-D-erythritol 2-phosphate (CDP-ME2P) to 2-C-methyl-D-erythritol 2,4-cyclodiphosphate (ME-CPP) with a corresponding release of cytidine 5-monophosphate (CMP). This is 2-C-methyl-D-erythritol 2,4-cyclodiphosphate synthase from Bacillus cytotoxicus (strain DSM 22905 / CIP 110041 / 391-98 / NVH 391-98).